The following is a 544-amino-acid chain: L-aspartate oxidase (544 aa).

FAD-binding positions include Ser-17–Ala-20, Lys-39, Ser-46–Gly-53, and Asp-221. The Proton donor/acceptor role is filled by Arg-288. FAD is bound by residues Glu-373 and Ser-389–Leu-390.

The protein belongs to the FAD-dependent oxidoreductase 2 family. NadB subfamily. FAD serves as cofactor.

It is found in the cytoplasm. It carries out the reaction L-aspartate + O2 = iminosuccinate + H2O2. It functions in the pathway cofactor biosynthesis; NAD(+) biosynthesis; iminoaspartate from L-aspartate (oxidase route): step 1/1. Functionally, catalyzes the oxidation of L-aspartate to iminoaspartate, the first step in the de novo biosynthesis of NAD(+). The protein is L-aspartate oxidase of Acinetobacter baylyi (strain ATCC 33305 / BD413 / ADP1).